The chain runs to 243 residues: UPF0702 transmembrane protein YkjA (243 aa).

The next 3 helical transmembrane spans lie at 3 to 23 (WMVWVFLLKPVIVFSIAYILF), 34 to 54 (MNNFDLLLTFAIGTIISEPIL), and 58 to 78 (LPMSIYYAGAFLVLYLIMSKL).

The protein belongs to the UPF0702 family.

It is found in the cell membrane. In Bacillus subtilis (strain 168), this protein is UPF0702 transmembrane protein YkjA (ykjA).